The chain runs to 95 residues: Aspartyl/glutamyl-tRNA(Asn/Gln) amidotransferase subunit C (95 aa).

It belongs to the GatC family. As to quaternary structure, heterotrimer of A, B and C subunits.

The enzyme catalyses L-glutamyl-tRNA(Gln) + L-glutamine + ATP + H2O = L-glutaminyl-tRNA(Gln) + L-glutamate + ADP + phosphate + H(+). It catalyses the reaction L-aspartyl-tRNA(Asn) + L-glutamine + ATP + H2O = L-asparaginyl-tRNA(Asn) + L-glutamate + ADP + phosphate + 2 H(+). In terms of biological role, allows the formation of correctly charged Asn-tRNA(Asn) or Gln-tRNA(Gln) through the transamidation of misacylated Asp-tRNA(Asn) or Glu-tRNA(Gln) in organisms which lack either or both of asparaginyl-tRNA or glutaminyl-tRNA synthetases. The reaction takes place in the presence of glutamine and ATP through an activated phospho-Asp-tRNA(Asn) or phospho-Glu-tRNA(Gln). This Xanthobacter autotrophicus (strain ATCC BAA-1158 / Py2) protein is Aspartyl/glutamyl-tRNA(Asn/Gln) amidotransferase subunit C.